Consider the following 69-residue polypeptide: Cytochrome c oxidase subunit 8A, mitochondrial (69 aa).

The transit peptide at 1-25 (MSVLTPLLLRGLTGPARRLPVPRAQ) directs the protein to the mitochondrion. An SIFI-degron motif is present at residues 2–19 (SVLTPLLLRGLTGPARRL). Residues 26-36 (IHSKPPREQLG) lie on the Mitochondrial matrix side of the membrane. Residues 37 to 60 (TMDIAIGLTSCFLCFLLPSGWVLS) traverse the membrane as a helical segment. Residues 61–69 (HMENYKKRE) lie on the Mitochondrial intermembrane side of the membrane.

This sequence belongs to the cytochrome c oxidase VIII family. Component of the cytochrome c oxidase (complex IV, CIV), a multisubunit enzyme composed of 14 subunits. The complex is composed of a catalytic core of 3 subunits MT-CO1, MT-CO2 and MT-CO3, encoded in the mitochondrial DNA, and 11 supernumerary subunits COX4I1 (or COX4I2), COX5A, COX5B, COX6A2 (or COX6A1), COX6B1 (or COX6B2), COX6C, COX7A1 (or COX7A2), COX7B, COX7C, COX8B and NDUFA4, which are encoded in the nuclear genome. The complex exists as a monomer or a dimer and forms supercomplexes (SCs) in the inner mitochondrial membrane with NADH-ubiquinone oxidoreductase (complex I, CI) and ubiquinol-cytochrome c oxidoreductase (cytochrome b-c1 complex, complex III, CIII), resulting in different assemblies (supercomplex SCI(1)III(2)IV(1) and megacomplex MCI(2)III(2)IV(2)). In response to mitochondrial stress, the precursor protein is ubiquitinated by the SIFI complex in the cytoplasm before mitochondrial import, leading to its degradation. Within the SIFI complex, UBR4 initiates ubiquitin chain that are further elongated or branched by KCMF1.

The protein localises to the mitochondrion inner membrane. The protein operates within energy metabolism; oxidative phosphorylation. In terms of biological role, component of the cytochrome c oxidase, the last enzyme in the mitochondrial electron transport chain which drives oxidative phosphorylation. The respiratory chain contains 3 multisubunit complexes succinate dehydrogenase (complex II, CII), ubiquinol-cytochrome c oxidoreductase (cytochrome b-c1 complex, complex III, CIII) and cytochrome c oxidase (complex IV, CIV), that cooperate to transfer electrons derived from NADH and succinate to molecular oxygen, creating an electrochemical gradient over the inner membrane that drives transmembrane transport and the ATP synthase. Cytochrome c oxidase is the component of the respiratory chain that catalyzes the reduction of oxygen to water. Electrons originating from reduced cytochrome c in the intermembrane space (IMS) are transferred via the dinuclear copper A center (CU(A)) of subunit 2 and heme A of subunit 1 to the active site in subunit 1, a binuclear center (BNC) formed by heme A3 and copper B (CU(B)). The BNC reduces molecular oxygen to 2 water molecules using 4 electrons from cytochrome c in the IMS and 4 protons from the mitochondrial matrix. The protein is Cytochrome c oxidase subunit 8A, mitochondrial (COX8A) of Bos taurus (Bovine).